We begin with the raw amino-acid sequence, 476 residues long: Angiotensinogen (476 aa).

Residues 1 to 24 (MAPAGVSLRATILCLLAWAGLAAG) form the signal peptide. Asp-25 bears the Beta-decarboxylated aspartate; in form angiotensin-A mark. Residues Asn-38, Asn-161, Asn-295, and Asn-319 are each glycosylated (N-linked (GlcNAc...) asparagine). The cysteines at positions 42 and 162 are disulfide-linked.

This sequence belongs to the serpin family. As to quaternary structure, during pregnancy, exists as a disulfide-linked 2:2 heterotetramer with the proform of PRG2 and as a complex (probably a 2:2:2 heterohexamer) with pro-PRG2 and C3dg. In terms of processing, beta-decarboxylation of Asp-25 in angiotensin-2, by mononuclear leukocytes produces alanine. The resulting peptide form, angiotensin-A, has the same affinity for the AT1 receptor as angiotensin-2, but a higher affinity for the AT2 receptor. In response to low blood pressure, the enzyme renin/REN cleaves angiotensinogen to produce angiotensin-1. Angiotensin-1 is a substrate of ACE (angiotensin converting enzyme) that removes a dipeptide to yield the physiologically active peptide angiotensin-2. Angiotensin-1 and angiotensin-2 can be further processed to generate angiotensin-3, angiotensin-4. Angiotensin 1-9 is cleaved from angiotensin-1 by ACE2 and can be further processed by ACE to produce angiotensin 1-7, angiotensin 1-5 and angiotensin 1-4. Angiotensin 1-7 has also been proposed to be cleaved from angiotensin-2 by ACE2 or from angiotensin-1 by MME (neprilysin). Post-translationally, the disulfide bond is labile. Angiotensinogen is present in the circulation in a near 40:60 ratio with the oxidized disulfide-bonded form, which preferentially interacts with receptor-bound renin. As to expression, expressed by the liver and secreted in plasma.

It localises to the secreted. Functionally, essential component of the renin-angiotensin system (RAS), a potent regulator of blood pressure, body fluid and electrolyte homeostasis. Acts directly on vascular smooth muscle as a potent vasoconstrictor, affects cardiac contractility and heart rate through its action on the sympathetic nervous system, and alters renal sodium and water absorption through its ability to stimulate the zona glomerulosa cells of the adrenal cortex to synthesize and secrete aldosterone. Acts by binding to angiotensin receptors AGTR1 and AGTR2. Also binds the DEAR/FBXW7-AS1 receptor. In terms of biological role, stimulates aldosterone release. Its function is as follows. Is a ligand for the G-protein coupled receptor MAS1. Has vasodilator and antidiuretic effects. Has an antithrombotic effect that involves MAS1-mediated release of nitric oxide from platelets. This is Angiotensinogen from Homo sapiens (Human).